Reading from the N-terminus, the 87-residue chain is UPF0367 protein P9211_01391 (87 aa).

This sequence belongs to the UPF0367 family.

The polypeptide is UPF0367 protein P9211_01391 (Prochlorococcus marinus (strain MIT 9211)).